We begin with the raw amino-acid sequence, 200 residues long: Adenylyl-sulfate kinase (200 aa).

35–42 serves as a coordination point for ATP; it reads GLPASGKS. Residue S109 is the Phosphoserine intermediate of the active site.

This sequence belongs to the APS kinase family.

The catalysed reaction is adenosine 5'-phosphosulfate + ATP = 3'-phosphoadenylyl sulfate + ADP + H(+). The protein operates within sulfur metabolism; hydrogen sulfide biosynthesis; sulfite from sulfate: step 2/3. In terms of biological role, catalyzes the synthesis of activated sulfate. The protein is Adenylyl-sulfate kinase of Thermodesulfovibrio yellowstonii (strain ATCC 51303 / DSM 11347 / YP87).